The chain runs to 870 residues: Endoribonuclease YSH1 (870 aa).

Residues histidine 159, histidine 161, aspartate 163, histidine 164, histidine 256, and aspartate 277 each contribute to the Zn(2+) site. The active-site Proton donor is histidine 499. Histidine 521 is a binding site for Zn(2+). Residues 598-627 (ITELTEEKEEADEIKEDNGETDTTQKPNES) form a disordered region. A compositionally biased stretch (acidic residues) spans 601–612 (LTEEKEEADEIK). The segment covering 618-627 (TDTTQKPNES) has biased composition (polar residues).

Belongs to the metallo-beta-lactamase superfamily. RNA-metabolizing metallo-beta-lactamase-like family. CPSF2/YSH1 subfamily.

It localises to the nucleus. Component of the cleavage factor I (CF I) involved in pre-mRNA 3'-end processing. The polypeptide is Endoribonuclease YSH1 (YSH1) (Candida albicans (strain SC5314 / ATCC MYA-2876) (Yeast)).